Here is a 617-residue protein sequence, read N- to C-terminus: Proline--tRNA ligase (617 aa).

This sequence belongs to the class-II aminoacyl-tRNA synthetase family. ProS type 1 subfamily. Homodimer.

It localises to the cytoplasm. The catalysed reaction is tRNA(Pro) + L-proline + ATP = L-prolyl-tRNA(Pro) + AMP + diphosphate. Catalyzes the attachment of proline to tRNA(Pro) in a two-step reaction: proline is first activated by ATP to form Pro-AMP and then transferred to the acceptor end of tRNA(Pro). As ProRS can inadvertently accommodate and process non-cognate amino acids such as alanine and cysteine, to avoid such errors it has two additional distinct editing activities against alanine. One activity is designated as 'pretransfer' editing and involves the tRNA(Pro)-independent hydrolysis of activated Ala-AMP. The other activity is designated 'posttransfer' editing and involves deacylation of mischarged Ala-tRNA(Pro). The misacylated Cys-tRNA(Pro) is not edited by ProRS. This chain is Proline--tRNA ligase, found in Streptococcus pneumoniae (strain 70585).